The primary structure comprises 472 residues: Proline--tRNA ligase (472 aa).

It belongs to the class-II aminoacyl-tRNA synthetase family. ProS type 3 subfamily. Homodimer.

The protein resides in the cytoplasm. The enzyme catalyses tRNA(Pro) + L-proline + ATP = L-prolyl-tRNA(Pro) + AMP + diphosphate. Functionally, catalyzes the attachment of proline to tRNA(Pro) in a two-step reaction: proline is first activated by ATP to form Pro-AMP and then transferred to the acceptor end of tRNA(Pro). The polypeptide is Proline--tRNA ligase (Ureaplasma parvum serovar 3 (strain ATCC 27815 / 27 / NCTC 11736)).